Consider the following 275-residue polypeptide: 2,3,4,5-tetrahydropyridine-2,6-dicarboxylate N-succinyltransferase (275 aa).

This sequence belongs to the transferase hexapeptide repeat family.

The protein resides in the cytoplasm. The enzyme catalyses (S)-2,3,4,5-tetrahydrodipicolinate + succinyl-CoA + H2O = (S)-2-succinylamino-6-oxoheptanedioate + CoA. It participates in amino-acid biosynthesis; L-lysine biosynthesis via DAP pathway; LL-2,6-diaminopimelate from (S)-tetrahydrodipicolinate (succinylase route): step 1/3. The protein is 2,3,4,5-tetrahydropyridine-2,6-dicarboxylate N-succinyltransferase of Burkholderia multivorans (strain ATCC 17616 / 249).